The sequence spans 181 residues: ATP-dependent protease subunit HslV (181 aa).

The active site involves Thr-6. Positions 162, 165, and 168 each coordinate Na(+).

The protein belongs to the peptidase T1B family. HslV subfamily. A double ring-shaped homohexamer of HslV is capped on each side by a ring-shaped HslU homohexamer. The assembly of the HslU/HslV complex is dependent on binding of ATP.

Its subcellular location is the cytoplasm. It catalyses the reaction ATP-dependent cleavage of peptide bonds with broad specificity.. Its activity is regulated as follows. Allosterically activated by HslU binding. Protease subunit of a proteasome-like degradation complex believed to be a general protein degrading machinery. This chain is ATP-dependent protease subunit HslV, found in Nitratidesulfovibrio vulgaris (strain ATCC 29579 / DSM 644 / CCUG 34227 / NCIMB 8303 / VKM B-1760 / Hildenborough) (Desulfovibrio vulgaris).